Consider the following 310-residue polypeptide: Protein TIFY 6A (310 aa).

The Tify domain maps to 141-176 (SKPLPPQLTIFYAGSVLVYQDIAPEKAQAIMLLAGN). A Jas motif is present at residues 259 to 284 (PQTRKASLARFLEKRKERVINVSPYY). Residues 261–268 (TRKASLAR) carry the Nuclear localization signal motif.

This sequence belongs to the TIFY/JAZ family. As to quaternary structure, homo- and heterodimer. Interacts with MYC2, AFPH2/NINJA, TIFY10A/JAZ1, TIFY6B/JAZ3, TIFY5A/JAZ8, TIFY9/JAZ10 and TIFY3A/JAZ11. Interacts with RHD6 and RSL1. Post-translationally, ubiquitinated. Targeted for degradation by the SCF(COI1) E3 ubiquitin ligase-proteasome pathway during jasmonate signaling.

The protein localises to the nucleus. Repressor of jasmonate responses. Interacts with and suppresses RHD6 and RSL1 transcription factor activities to negatively regulate jasmonate-stimulated root hair development. The polypeptide is Protein TIFY 6A (TIFY6A) (Arabidopsis thaliana (Mouse-ear cress)).